A 20-amino-acid chain; its full sequence is Brevinin-1LT (20 aa).

An intrachain disulfide couples Cys14 to Cys20.

Expressed by the skin glands.

It is found in the secreted. In terms of biological role, antimicrobial peptide. This chain is Brevinin-1LT, found in Rana latastei (Italian agile frog).